The chain runs to 100 residues: Urease subunit gamma (100 aa).

Belongs to the urease gamma subunit family. As to quaternary structure, heterotrimer of UreA (gamma), UreB (beta) and UreC (alpha) subunits. Three heterotrimers associate to form the active enzyme.

The protein resides in the cytoplasm. It catalyses the reaction urea + 2 H2O + H(+) = hydrogencarbonate + 2 NH4(+). The protein operates within nitrogen metabolism; urea degradation; CO(2) and NH(3) from urea (urease route): step 1/1. This chain is Urease subunit gamma, found in Verminephrobacter eiseniae (strain EF01-2).